A 130-amino-acid polypeptide reads, in one-letter code: Sec-independent protein translocase protein TatB (130 aa).

The chain crosses the membrane as a helical span at residues 1–21; it reads MFDIGFTELTLIFIIGLVVLG. Basic and acidic residues-rich tracts occupy residues 57–67 and 111–130; these read QDMQERMEKQM and PSDK…RRHD. The segment at 57–130 is disordered; sequence QDMQERMEKQ…NHDQDSRRHD (74 aa).

It belongs to the TatB family. As to quaternary structure, the Tat system comprises two distinct complexes: a TatABC complex, containing multiple copies of TatA, TatB and TatC subunits, and a separate TatA complex, containing only TatA subunits. Substrates initially bind to the TatABC complex, which probably triggers association of the separate TatA complex to form the active translocon.

It localises to the cell inner membrane. Its function is as follows. Part of the twin-arginine translocation (Tat) system that transports large folded proteins containing a characteristic twin-arginine motif in their signal peptide across membranes. Together with TatC, TatB is part of a receptor directly interacting with Tat signal peptides. TatB may form an oligomeric binding site that transiently accommodates folded Tat precursor proteins before their translocation. The protein is Sec-independent protein translocase protein TatB of Alcanivorax borkumensis (strain ATCC 700651 / DSM 11573 / NCIMB 13689 / SK2).